The following is a 341-amino-acid chain: Putative UPF0607 protein ENSP00000383144 (341 aa).

2 disordered regions span residues 70-131 (RLPK…NPRP) and 218-279 (LMVG…PPAK). The segment covering 72–101 (PKTEVRAEEPKEATEVKDQVETQEQEDNKR) has biased composition (basic and acidic residues). The segment covering 108–127 (EAASTSRPLETQGNLTSSWY) has biased composition (polar residues). Basic residues predominate over residues 243–252 (AGHRSHKRKL).

It belongs to the UPF0607 family.

The sequence is that of Putative UPF0607 protein ENSP00000383144 from Homo sapiens (Human).